The following is a 242-amino-acid chain: ATP-dependent dethiobiotin synthetase BioD (242 aa).

12-17 contributes to the ATP binding site; the sequence is EVGKTV. T16 is a Mg(2+) binding site. K37 is a catalytic residue. Residue S41 coordinates substrate. ATP contacts are provided by residues D51 and 112 to 115; that span reads EGAG. 2 residues coordinate Mg(2+): D51 and E112.

Belongs to the dethiobiotin synthetase family. In terms of assembly, homodimer. Mg(2+) serves as cofactor.

Its subcellular location is the cytoplasm. The catalysed reaction is (7R,8S)-7,8-diammoniononanoate + CO2 + ATP = (4R,5S)-dethiobiotin + ADP + phosphate + 3 H(+). Its pathway is cofactor biosynthesis; biotin biosynthesis; biotin from 7,8-diaminononanoate: step 1/2. Functionally, catalyzes a mechanistically unusual reaction, the ATP-dependent insertion of CO2 between the N7 and N8 nitrogen atoms of 7,8-diaminopelargonic acid (DAPA, also called 7,8-diammoniononanoate) to form a ureido ring. This is ATP-dependent dethiobiotin synthetase BioD from Bacillus cereus (strain G9842).